The chain runs to 580 residues: E3 ubiquitin-protein ligase TRIM45 (580 aa).

An RING-type zinc finger spans residues 29 to 98; the sequence is CPLCLGLFKA…QIGILCPVCD (70 aa). 2 consecutive B box-type zinc fingers follow at residues 130 to 176 and 186 to 227; these read GQGL…MVDL and GKPI…CDFT. Zn(2+)-binding residues include C135, C138, C158, H162, C191, H194, C214, and H219. Residues 281 to 335 adopt a coiled-coil conformation; the sequence is SEGYIKAIEEHRDKLLKQLEDIRAQKENSLQLQKAQLEQLLADMRTGVEFTEHLL. The stretch at 394–497 is one Filamin repeat; it reads TKEVDPAKCV…VQGSPFTVMV (104 aa).

This sequence belongs to the TRIM/RBCC family. Expressed in skeletal muscle, brain, heart and pancreas.

The protein localises to the cytoplasm. It is found in the nucleus. The catalysed reaction is S-ubiquitinyl-[E2 ubiquitin-conjugating enzyme]-L-cysteine + [acceptor protein]-L-lysine = [E2 ubiquitin-conjugating enzyme]-L-cysteine + N(6)-ubiquitinyl-[acceptor protein]-L-lysine.. E3 ubiquitin-protein ligase that plays a role in the regulation of inflammatory response. Mechanistically, mediates the 'Lys-48'-linked polyubiquitination of TAB2, a regulatory protein of the kinase TAK1, leading to its degradation via the proteasomal pathway and inhibition of the TLR-mediated inflammatory immune response. May act as a transcriptional repressor in mitogen-activated protein kinase signaling pathway. In Homo sapiens (Human), this protein is E3 ubiquitin-protein ligase TRIM45 (TRIM45).